The chain runs to 337 residues: RNA 3'-terminal phosphate cyclase (337 aa).

ATP is bound by residues Gln-100 and Tyr-281–Gln-285. Catalysis depends on His-306, which acts as the Tele-AMP-histidine intermediate.

It belongs to the RNA 3'-terminal cyclase family. Type 1 subfamily.

The protein resides in the cytoplasm. The enzyme catalyses a 3'-end 3'-phospho-ribonucleotide-RNA + ATP = a 3'-end 2',3'-cyclophospho-ribonucleotide-RNA + AMP + diphosphate. Functionally, catalyzes the conversion of 3'-phosphate to a 2',3'-cyclic phosphodiester at the end of RNA. The mechanism of action of the enzyme occurs in 3 steps: (A) adenylation of the enzyme by ATP; (B) transfer of adenylate to an RNA-N3'P to produce RNA-N3'PP5'A; (C) and attack of the adjacent 2'-hydroxyl on the 3'-phosphorus in the diester linkage to produce the cyclic end product. The biological role of this enzyme is unknown but it is likely to function in some aspects of cellular RNA processing. In Methanothermobacter thermautotrophicus (strain ATCC 29096 / DSM 1053 / JCM 10044 / NBRC 100330 / Delta H) (Methanobacterium thermoautotrophicum), this protein is RNA 3'-terminal phosphate cyclase (rtcA).